We begin with the raw amino-acid sequence, 663 residues long: Cytochrome bo(3) ubiquinol oxidase subunit 1 (663 aa).

Topologically, residues 1-16 (MFGKLSLDAVPFHEPI) are periplasmic. Residues 17–35 (VMVTIAGIILGGLALVGLI) traverse the membrane as a helical segment. The Cytoplasmic segment spans residues 36 to 52 (TYFGKWTYLWKEWLTSV). The helical transmembrane segment at 53-80 (DHKRLGIMYIIVAIVMLLRGFADAIMMR) threads the bilayer. Ubiquinone-8 is bound by residues Arg-71 and Asp-75. Over 81 to 95 (SQQALASAGEAGFLP) the chain is Periplasmic. The helical transmembrane segment at 96 to 132 (PHHYDQIFTAHGVIMIFFVAMPFVIGLMNLVVPLQIG) threads the bilayer. His-98 is a ubiquinone-8 binding site. His-106 is a binding site for heme b. Topologically, residues 133-137 (ARDVA) are cytoplasmic. The helical transmembrane segment at 138-161 (FPFLNNLSFWFTVVGVILVNVSLG) threads the bilayer. Residues 162-184 (VGEFAQTGWLAYPPLSGIEYSPG) are Periplasmic-facing. Position 170 (Trp-170) interacts with heme b. A helical transmembrane segment spans residues 185–215 (VGVDYWIWSLQLSGIGTTLTGINFFVTILKM). The Cytoplasmic portion of the chain corresponds to 216 to 224 (RAPGMTMFK). Residues 225-260 (MPVFTWASLCANVLIIASFPILTVTVALLTLDRYLG) form a helical membrane-spanning segment. Topologically, residues 261 to 270 (THFFTNDMGG) are periplasmic. Residues 271–307 (NMMMYINLIWAWGHPEVYILILPVFGVFSEIAATFSR) traverse the membrane as a helical segment. His-284 provides a ligand contact to Cu(2+). A cross-link (1'-histidyl-3'-tyrosine (His-Tyr)) is located at residues 284-288 (HPEVY). Fe(II)-heme o is bound at residue Tyr-288. Over 308–311 (KRLF) the chain is Cytoplasmic. The helical transmembrane segment at 312–326 (GYTSLVWATVCITVL) threads the bilayer. Over 327–340 (SFIVWLHHFFTMGA) the chain is Periplasmic. The Cu(2+) site is built by His-333 and His-334. A helical membrane pass occupies residues 341–369 (GANVNAFFGITTMIIAIPTGVKIFNWLFT). Residues 370–377 (MYQGRIVF) lie on the Cytoplasmic side of the membrane. A helical membrane pass occupies residues 378–409 (HSAMLWTIGFIVTFSVGGMTGVLLAVPGADFV). The Periplasmic portion of the chain corresponds to 410–412 (LHN). Fe(II)-heme o contacts are provided by His-411 and His-419. The helical transmembrane segment at 413-445 (SLFLIAHFHNVIIGGVVFGCFAGMTYWWPKAFG) threads the bilayer. Residue His-421 participates in heme b binding. Topologically, residues 446–448 (FKL) are cytoplasmic. Residues 449 to 477 (NETWGKRAFWFWIIGFFVAFMPLYALGFM) form a helical membrane-spanning segment. Over 478-489 (GMTRRLSQQIDP) the chain is Periplasmic. The heme b site is built by Arg-481 and Arg-482. Residues 490–521 (QFHTMLMIAASGAVLIALGILCLVIQMYVSIR) form a helical membrane-spanning segment. Over 522–587 (DRDQNRDLTG…DHYEEIHMPK (66 aa)) the chain is Cytoplasmic. A helical membrane pass occupies residues 588–606 (NSGAGIVIAAFSTIFGFAM). At 607-613 (IWHIWWL) the chain is on the periplasmic side. Residues 614–632 (AIVGFAGMIITWIVKSFDE) traverse the membrane as a helical segment. Residues 633-663 (DVDYYVPVAEIEKLENQHFDEITKAGLKNGN) lie on the Cytoplasmic side of the membrane.

The protein belongs to the heme-copper respiratory oxidase family. As to quaternary structure, the cytochrome bo(3) ubiquinol oxidase complex is a heterooctamer of two A chains, two B chains, two C chains and two D chains. It depends on Cu(2+) as a cofactor. Requires heme b as cofactor. Fe(II)-heme o serves as cofactor.

It is found in the cell inner membrane. The enzyme catalyses 2 a ubiquinol + O2 + n H(+)(in) = 2 a ubiquinone + 2 H2O + n H(+)(out). In terms of biological role, cytochrome bo(3) ubiquinol oxidase is the terminal enzyme in the aerobic respiratory chain of E.coli that predominates when cells are grown at high aeration. Catalyzes the four-electron reduction of O2 to water, using a ubiquinol as a membrane soluble electron donor for molecular oxygen reduction; ubiquinol-8 is the natural substrate for E.coli. Has proton pump activity across the membrane in addition to electron transfer, pumping 2 protons/electron and generating a proton motive force. All the redox centers of this enzyme complex are located within the largest subunit, subunit I. Protons are probably pumped via D- and K- channels found in this subunit. The protein is Cytochrome bo(3) ubiquinol oxidase subunit 1 (cyoB) of Escherichia coli O157:H7.